The following is a 626-amino-acid chain: Putative ankyrin repeat protein L768 (626 aa).

ANK repeat units lie at residues 217–246 (NLYD…EYDF), 333–362 (DLDM…NINK), 421–451 (TAEN…TEHI), 515–545 (SNLK…NQDY), and 547–571 (QWAL…NVNP).

This chain is Putative ankyrin repeat protein L768, found in Acanthamoeba polyphaga mimivirus (APMV).